Reading from the N-terminus, the 106-residue chain is Large ribosomal subunit protein eL42 (106 aa).

Belongs to the eukaryotic ribosomal protein eL42 family.

In Yarrowia lipolytica (strain CLIB 122 / E 150) (Yeast), this protein is Large ribosomal subunit protein eL42 (RPL44).